The chain runs to 422 residues: G-protein coupled receptor 83 (422 aa).

An N-terminal signal peptide occupies residues 1-17 (MNVPPVLLLFLLSSVRA). At 18–70 (TEQPQVVTEHPSMDAALTGANASHFWANYTFSDWQNFVGRRRYGAESQNPTVK) the chain is on the extracellular side. Residues 71–91 (ALLIVAYSFIIVFSLFGNVLV) form a helical membrane-spanning segment. Over 92-106 (CHVIFKNQRMHSATS) the chain is Cytoplasmic. The chain crosses the membrane as a helical span at residues 107-127 (LFIVNLAVADIMITLLNTPFT). At 128 to 143 (LVRFVNSTWVFGKGMC) the chain is on the extracellular side. A disulfide bridge connects residues Cys143 and Cys223. Residues 144-166 (HVSRFAQYCSLHVSALTLTAIAV) form a helical membrane-spanning segment. Residues 167–184 (DRHQVIMHPLKPRISITK) are Cytoplasmic-facing. The helical transmembrane segment at 185–205 (GVIYIAVIWVMATFFSLPHAI) threads the bilayer. At 206-236 (CQKLFTFKYSEDIVRSLCLPDFPEPADLFWK) the chain is on the extracellular side. The chain crosses the membrane as a helical span at residues 237–257 (YLDLATFILLYLLPLFIISVA). The Cytoplasmic segment spans residues 258–292 (YARVAKKLWLCNTIGDVTTEQYLALRRKKKTTVKM). The chain crosses the membrane as a helical span at residues 293 to 313 (LVLVVVLFALCWFPLNCYVLL). Over 314–326 (LSSKAIHTNNALY) the chain is Extracellular. A helical transmembrane segment spans residues 327 to 347 (FAFHWFAMSSTCYNPFIYCWL). The Cytoplasmic portion of the chain corresponds to 348–422 (NENFRVELKA…SSVEPTVAVS (75 aa)). The disordered stretch occupies residues 401-422 (PSSQIQSGKTDLSSVEPTVAVS).

This sequence belongs to the G-protein coupled receptor 1 family. As to expression, expressed preferentially in brain, and its neuronal expression is relegated to limbic brain regions, particularly in forebrain.

Its subcellular location is the cell membrane. G-protein coupled receptor for PEN, a neuropeptide produced from the precursor protein, proSAAS (encoded by PCSK1N). Acts through a G(i)- and G(q)-alpha-alpha-mediated pathway in response to PEN. Plays a role in food intake and body weight regulation. May contribute to the regulation of anxiety-related behaviors. In Rattus norvegicus (Rat), this protein is G-protein coupled receptor 83.